Reading from the N-terminus, the 369-residue chain is Anhydro-N-acetylmuramic acid kinase (369 aa).

Residue 12 to 19 (GTSMDGVD) coordinates ATP.

It belongs to the anhydro-N-acetylmuramic acid kinase family.

The enzyme catalyses 1,6-anhydro-N-acetyl-beta-muramate + ATP + H2O = N-acetyl-D-muramate 6-phosphate + ADP + H(+). It participates in amino-sugar metabolism; 1,6-anhydro-N-acetylmuramate degradation. The protein operates within cell wall biogenesis; peptidoglycan recycling. Catalyzes the specific phosphorylation of 1,6-anhydro-N-acetylmuramic acid (anhMurNAc) with the simultaneous cleavage of the 1,6-anhydro ring, generating MurNAc-6-P. Is required for the utilization of anhMurNAc either imported from the medium or derived from its own cell wall murein, and thus plays a role in cell wall recycling. This is Anhydro-N-acetylmuramic acid kinase from Shewanella sp. (strain ANA-3).